The chain runs to 113 residues: Hydrogenase maturation factor HypA 1 (113 aa).

A Ni(2+)-binding site is contributed by histidine 2. The Zn(2+) site is built by cysteine 73, cysteine 76, cysteine 89, and cysteine 92.

This sequence belongs to the HypA/HybF family.

In terms of biological role, involved in the maturation of [NiFe] hydrogenases. Required for nickel insertion into the metal center of the hydrogenase. This is Hydrogenase maturation factor HypA 1 from Bradyrhizobium diazoefficiens (strain JCM 10833 / BCRC 13528 / IAM 13628 / NBRC 14792 / USDA 110).